A 1129-amino-acid polypeptide reads, in one-letter code: Protein LANA1 (1129 aa).

Disordered regions lie at residues 1–988 (MAPP…PVPY) and 1110–1129 (LPLTQPGENQGPGDSPQEMT). 2 stretches are compositionally biased toward basic and acidic residues: residues 28–41 (RSPERCDLGDDLHL) and 48–58 (VADSVDGRECG). Residues 85–104 (PVAPIPSPAPATPLPPPALL) show a composition bias toward pro residues. Residues 139 to 156 (SPESSQRPPLSSPTGRPD) show a composition bias toward polar residues. Over residues 161-185 (MRPPPSQQTTPPHSPTTPPPEPPSK) the composition is skewed to pro residues. The span at 186–197 (SSPDSLAPSTLR) shows a compositional bias: low complexity. The segment covering 207–217 (PQGPSTLNPIC) has biased composition (polar residues). Residues 263–275 (PISIGSSSPSEGS) are compositionally biased toward low complexity. 2 stretches are compositionally biased toward basic and acidic residues: residues 292-301 (EASKNEKECS) and 314-323 (EISKESQVDK). Residues 324–419 (DDNDNKDDEE…DKKEDEEDGG (96 aa)) show a composition bias toward acidic residues. Low complexity predominate over residues 431-471 (QQQQEPQQQEPQQQEPQQQEPQQQEPQQQEPQQQEPQQQEP). The segment covering 472–528 (QQREPQQREPQQREPQQREPQQREPQQREPQQREPQQREPQQREPQQREPQQREPQQ) has biased composition (basic and acidic residues). Residues 529 to 596 (REPQQQEPQQ…QQQEPQQQDE (68 aa)) are compositionally biased toward low complexity. The span at 597-888 (QQQDEQQQDE…QELEEVEEQE (292 aa)) shows a compositional bias: acidic residues. Polar residues predominate over residues 924–934 (THEQIASSPPG). The segment covering 962–979 (PGVRMRRVPVTHPKKPHP) has biased composition (basic residues). Residues 1008–1129 (FLGKDGRRDP…GPGDSPQEMT (122 aa)) form a DNA-binding domain region.

In terms of assembly, homooligomer. Interacts with host BRD2. Interacts with host RELA, ELOB, ELOC and CUL5; these interactions induce the proteasomal degradation of host RELA. Interacts with host TRIM28 and NFE2L2/NRF2; these interactions are essential for the shutdown of lytic gene expression during the early stage of infection. Interacts (via N-terminus) with host histones H2A and H2B; these interactions are essential to dock LANA1 onto chromosomes. Interacts with host BUB1 and PCNA. Interacts with host NAP1L1; this interaction is required for LANA1-dependent DNA replication. Interacts with components of the host MLL1 complex KMT2A and WDR5.

It is found in the host nucleus. Its function is as follows. Multifunctional protein that plays a role in the replication and long-term persistence of the viral episomal genome in dividing cells. Binds to mitotic chromosomes via its N-terminal region and to a 16-bp imperfect palindrome within the origin of replication (oriP) located in the viral terminal repeat (TR) through its C-terminal. Tethers viral episomes to chromosomes during mitosis. Plays a critical role in the shutdown of lytic gene expression during the early stage of infection by interacting with host TRIM28. Also plays a role in the repression of host NF-kappa-B activity upon TNF-alpha stimulation by promoting the proteasomal degradation of host RELA. Promotes nuclear localization and cleavage of host STAT6 leading to constitutive activation of the IL13/STAT6 signaling pathway to promote viral latency. Interacts with and modulates the histone methyltransferase MLL1 complex activity, leading to its recruitment on viral DNA terminal repeats changing the dynamic of histone H3 methylated 'Lys-4'(H3K4me) profile during the initial hours following infection. The chain is Protein LANA1 (LANA1) from Homo sapiens (Human).